The chain runs to 359 residues: UDP-2-acetamido-2-deoxy-3-oxo-D-glucuronate aminotransferase (359 aa).

UDP-2-acetamido-2-deoxy-alpha-D-ribo-hex-3-uluronate-binding residues include glycine 29, tyrosine 31, and serine 184. Lysine 185 is subject to N6-(pyridoxal phosphate)lysine. Arginine 229, histidine 308, and tyrosine 309 together coordinate UDP-2-acetamido-2-deoxy-alpha-D-ribo-hex-3-uluronate.

It belongs to the DegT/DnrJ/EryC1 family. Homodimer. The cofactor is pyridoxal 5'-phosphate.

It carries out the reaction UDP-2-acetamido-2-deoxy-alpha-D-ribo-hex-3-uluronate + L-glutamate = UDP-2-acetamido-3-amino-2,3-dideoxy-alpha-D-glucuronate + 2-oxoglutarate. Its pathway is bacterial outer membrane biogenesis; LPS O-antigen biosynthesis. Functionally, plays a role in the biosynthesis of B-band O antigen for serotype O5. Catalyzes the amination of UDP-2-acetamido-2-deoxy-3-oxo-D-glucuronic acid (UDP-3-oxo-D-GlcNAcA) to UDP-2-acetamido-3-amino-2,3-dideoxy-D-glucuronic acid (UDP-GlcNAc3NA), using L-glutamate as the preferred amine donor. This Pseudomonas aeruginosa (strain ATCC 15692 / DSM 22644 / CIP 104116 / JCM 14847 / LMG 12228 / 1C / PRS 101 / PAO1) protein is UDP-2-acetamido-2-deoxy-3-oxo-D-glucuronate aminotransferase.